The following is a 344-amino-acid chain: Protein YRO2 (344 aa).

Residues 1–34 (MSDYVELLKRGGNEAIKINPPTGADFHITSRGSD) lie on the Extracellular side of the membrane. Residues 35–55 (WLFTVFCVNLLFGVILVPLMF) traverse the membrane as a helical segment. Residues 56 to 62 (RKPVKDR) are Cytoplasmic-facing. A helical transmembrane segment spans residues 63-83 (FVYYTAIAPNLFMSIAYFTMA). At 84 to 119 (SNLGWIPVRAKYNHVQTSTQKEHPGYRQIFYARYVG) the chain is on the extracellular side. Residues 120–140 (WFLAFPWPIIQMSLLGGTPLW) form a helical membrane-spanning segment. Position 141 (Q141) is a topological domain, cytoplasmic. The chain crosses the membrane as a helical span at residues 142–162 (IAFNVGMTEIFTVCWLIAACV). At 163–172 (HSTYKWGYYT) the chain is on the extracellular side. Residues 173-193 (IGIGAAIVVCISLMTTTFNLV) traverse the membrane as a helical segment. Topologically, residues 194–202 (KARGKDVSN) are cytoplasmic. A helical membrane pass occupies residues 203–223 (VFITFMSVIMFLWLIAYPTCF). The Extracellular portion of the chain corresponds to 224–238 (GITDGGNVLQPDSAT). Residues 239–259 (IFYGIIDLLILSILPVLFMPL) traverse the membrane as a helical segment. At 260–344 (ANYLGIERLG…EEEDVATDSE (85 aa)) the chain is on the cytoplasmic side. Residues 282 to 344 (PVAEKKMPSP…EEEDVATDSE (63 aa)) are disordered. Residue K286 forms a Glycyl lysine isopeptide (Lys-Gly) (interchain with G-Cter in ubiquitin) linkage. At S293 the chain carries Phosphoserine. The span at 297 to 306 (SDSDSSIKEK) shows a compositional bias: basic and acidic residues. A compositionally biased stretch (basic residues) spans 307 to 330 (LKLKKKHKKDKKKAKKAKKAKKAK). Acidic residues predominate over residues 334–344 (EEEEDVATDSE). Position 341 is a phosphothreonine (T341). S343 is subject to Phosphoserine.

The protein belongs to the archaeal/bacterial/fungal opsin family.

The protein resides in the membrane. This chain is Protein YRO2 (YRO2), found in Saccharomyces cerevisiae (strain ATCC 204508 / S288c) (Baker's yeast).